The primary structure comprises 1356 residues: DNA-directed RNA polymerase subunit beta (1356 aa).

The protein belongs to the RNA polymerase beta chain family. As to quaternary structure, the RNAP catalytic core consists of 2 alpha, 1 beta, 1 beta' and 1 omega subunit. When a sigma factor is associated with the core the holoenzyme is formed, which can initiate transcription.

It carries out the reaction RNA(n) + a ribonucleoside 5'-triphosphate = RNA(n+1) + diphosphate. In terms of biological role, DNA-dependent RNA polymerase catalyzes the transcription of DNA into RNA using the four ribonucleoside triphosphates as substrates. This chain is DNA-directed RNA polymerase subunit beta, found in Caulobacter vibrioides (strain ATCC 19089 / CIP 103742 / CB 15) (Caulobacter crescentus).